The sequence spans 221 residues: LHFPL tetraspan subfamily member 5 protein (221 aa).

The Cytoplasmic segment spans residues 1 to 24 (MPKLLPAQEAARIYHTNYVRNARA). The chain crosses the membrane as a helical span at residues 25–45 (MGVLWALFTLCFSILMVVTFI). Topologically, residues 46–98 (QPYWIGDSIDTPQAGYFGLFSYCIGNALTGELICKGSPLDFGTIPSSAFKTAM) are extracellular. Residues 99 to 119 (FFVGISTFLIIGSILCFSLFF) traverse the membrane as a helical segment. Residues 120–128 (FCNAATVYK) are Cytoplasmic-facing. The helical transmembrane segment at 129–149 (VCAWMQLAAATGLMIGCLIYP) threads the bilayer. The Extracellular segment spans residues 150 to 179 (DGWDSSEVKRMCGDKTDKYTLGACTVRWAY). A helical membrane pass occupies residues 180–200 (ILCIIGILDALILSFLAFVLG). At 201–221 (NRQDNLLPSDFKVESKEEGNE) the chain is on the cytoplasmic side.

The protein belongs to the LHFP family.

It localises to the cell membrane. Functionally, probable component of the mechanotransducer (MET) non-specific cation channel complex. The chain is LHFPL tetraspan subfamily member 5 protein from Gallus gallus (Chicken).